A 256-amino-acid polypeptide reads, in one-letter code: Pimeloyl-[acyl-carrier protein] methyl ester esterase (256 aa).

The AB hydrolase-1 domain occupies 15–242 (HLVLLHGWGL…AAHAPFISHP (228 aa)). Substrate is bound by residues tryptophan 22, 82–83 (SL), and 143–147 (FLALQ). Catalysis depends on serine 82, which acts as the Nucleophile. Active-site residues include aspartate 207 and histidine 235. Histidine 235 is a binding site for substrate.

The protein belongs to the AB hydrolase superfamily. Carboxylesterase BioH family. In terms of assembly, monomer.

The protein localises to the cytoplasm. The enzyme catalyses 6-carboxyhexanoyl-[ACP] methyl ester + H2O = 6-carboxyhexanoyl-[ACP] + methanol + H(+). The protein operates within cofactor biosynthesis; biotin biosynthesis. Its function is as follows. The physiological role of BioH is to remove the methyl group introduced by BioC when the pimeloyl moiety is complete. It allows to synthesize pimeloyl-ACP via the fatty acid synthetic pathway through the hydrolysis of the ester bonds of pimeloyl-ACP esters. This is Pimeloyl-[acyl-carrier protein] methyl ester esterase from Escherichia coli O7:K1 (strain IAI39 / ExPEC).